The following is a 615-amino-acid chain: uncharacterized protein (615 aa).

D403 serves as the catalytic Proton acceptor. The active-site Proton donor is the E406.

The protein belongs to the glycosyl hydrolase 15 family.

This is an uncharacterized protein from Methanocaldococcus jannaschii (strain ATCC 43067 / DSM 2661 / JAL-1 / JCM 10045 / NBRC 100440) (Methanococcus jannaschii).